Consider the following 82-residue polypeptide: Defensin-like protein 275 (82 aa).

Positions 1–23 (MALSKFQLVALLITYTLLFSCQS) are cleaved as a signal peptide. 4 cysteine pairs are disulfide-bonded: C36-C78, C42-C65, C48-C76, and C52-C77.

The protein belongs to the DEFL family.

Its subcellular location is the secreted. The protein is Defensin-like protein 275 of Arabidopsis thaliana (Mouse-ear cress).